We begin with the raw amino-acid sequence, 197 residues long: Imidazoleglycerol-phosphate dehydratase (197 aa).

The protein belongs to the imidazoleglycerol-phosphate dehydratase family.

Its subcellular location is the cytoplasm. It catalyses the reaction D-erythro-1-(imidazol-4-yl)glycerol 3-phosphate = 3-(imidazol-4-yl)-2-oxopropyl phosphate + H2O. Its pathway is amino-acid biosynthesis; L-histidine biosynthesis; L-histidine from 5-phospho-alpha-D-ribose 1-diphosphate: step 6/9. The polypeptide is Imidazoleglycerol-phosphate dehydratase (Streptomyces avermitilis (strain ATCC 31267 / DSM 46492 / JCM 5070 / NBRC 14893 / NCIMB 12804 / NRRL 8165 / MA-4680)).